A 593-amino-acid chain; its full sequence is Aspartate--tRNA(Asp/Asn) ligase (593 aa).

Glutamate 172 lines the L-aspartate pocket. Residues 196–199 (QLFK) are aspartate. Arginine 218 is an L-aspartate binding site. ATP-binding positions include 218–220 (RDE) and glutamine 227. Residue histidine 450 participates in L-aspartate binding. Position 484 (glutamate 484) interacts with ATP. Residue arginine 491 participates in L-aspartate binding. ATP is bound at residue 536–539 (GLDR).

It belongs to the class-II aminoacyl-tRNA synthetase family. Type 1 subfamily. As to quaternary structure, homodimer.

It is found in the cytoplasm. It carries out the reaction tRNA(Asx) + L-aspartate + ATP = L-aspartyl-tRNA(Asx) + AMP + diphosphate. Aspartyl-tRNA synthetase with relaxed tRNA specificity since it is able to aspartylate not only its cognate tRNA(Asp) but also tRNA(Asn). Reaction proceeds in two steps: L-aspartate is first activated by ATP to form Asp-AMP and then transferred to the acceptor end of tRNA(Asp/Asn). This Nitrosomonas europaea (strain ATCC 19718 / CIP 103999 / KCTC 2705 / NBRC 14298) protein is Aspartate--tRNA(Asp/Asn) ligase.